We begin with the raw amino-acid sequence, 427 residues long: 3-phosphoshikimate 1-carboxyvinyltransferase (427 aa).

The 3-phosphoshikimate site is built by Lys-20, Ser-21, and Arg-25. Phosphoenolpyruvate is bound at residue Lys-20. 2 residues coordinate phosphoenolpyruvate: Gly-92 and Arg-120. Residues Ser-166, Gln-168, Asp-312, and Lys-339 each coordinate 3-phosphoshikimate. A phosphoenolpyruvate-binding site is contributed by Gln-168. Residue Asp-312 is the Proton acceptor of the active site. 2 residues coordinate phosphoenolpyruvate: Arg-343 and Arg-385.

Belongs to the EPSP synthase family. In terms of assembly, monomer.

It is found in the cytoplasm. The catalysed reaction is 3-phosphoshikimate + phosphoenolpyruvate = 5-O-(1-carboxyvinyl)-3-phosphoshikimate + phosphate. It participates in metabolic intermediate biosynthesis; chorismate biosynthesis; chorismate from D-erythrose 4-phosphate and phosphoenolpyruvate: step 6/7. Catalyzes the transfer of the enolpyruvyl moiety of phosphoenolpyruvate (PEP) to the 5-hydroxyl of shikimate-3-phosphate (S3P) to produce enolpyruvyl shikimate-3-phosphate and inorganic phosphate. The chain is 3-phosphoshikimate 1-carboxyvinyltransferase from Streptococcus equi subsp. zooepidemicus (strain H70).